The sequence spans 398 residues: Tyrosine--tRNA ligase (398 aa).

The 'HIGH' region motif lies at 42-51 (PTAPDLHLGH). The 'KMSKS' region motif lies at 226 to 230 (KMSKS). Lys-229 is an ATP binding site. The region spanning 341–397 (AFLEAAGLVKSRGEAKRLIKEGALSVDGVRCDDANSPLASGEYVIKLGKKRFLRLTV) is the S4 RNA-binding domain.

This sequence belongs to the class-I aminoacyl-tRNA synthetase family. TyrS type 2 subfamily. Homodimer.

It is found in the cytoplasm. The catalysed reaction is tRNA(Tyr) + L-tyrosine + ATP = L-tyrosyl-tRNA(Tyr) + AMP + diphosphate + H(+). Functionally, catalyzes the attachment of tyrosine to tRNA(Tyr) in a two-step reaction: tyrosine is first activated by ATP to form Tyr-AMP and then transferred to the acceptor end of tRNA(Tyr). The protein is Tyrosine--tRNA ligase of Nitratidesulfovibrio vulgaris (strain ATCC 29579 / DSM 644 / CCUG 34227 / NCIMB 8303 / VKM B-1760 / Hildenborough) (Desulfovibrio vulgaris).